The sequence spans 285 residues: Elongation factor Ts (285 aa).

An involved in Mg(2+) ion dislocation from EF-Tu region spans residues T75–V78.

It belongs to the EF-Ts family.

The protein localises to the cytoplasm. In terms of biological role, associates with the EF-Tu.GDP complex and induces the exchange of GDP to GTP. It remains bound to the aminoacyl-tRNA.EF-Tu.GTP complex up to the GTP hydrolysis stage on the ribosome. This Alcanivorax borkumensis (strain ATCC 700651 / DSM 11573 / NCIMB 13689 / SK2) protein is Elongation factor Ts.